The primary structure comprises 321 residues: Histidine N-alpha-methyltransferase (321 aa).

Residue tyrosine 56 participates in L-histidine binding. S-adenosyl-L-methionine is bound by residues glycine 86, lysine 92, aspartate 113, and 141–142; that span reads DF. L-histidine is bound by residues asparagine 166, tyrosine 206, and 282–284; that span reads EVS.

It belongs to the methyltransferase superfamily. EgtD family. Monomer.

The enzyme catalyses L-histidine + 3 S-adenosyl-L-methionine = hercynine + 3 S-adenosyl-L-homocysteine + 3 H(+). Its pathway is amino-acid biosynthesis; ergothioneine biosynthesis. Its function is as follows. Catalyzes the SAM-dependent triple methylation of the alpha-amino group of histidine to form hercynine, a step in the biosynthesis pathway of ergothioneine (ERG). ERG is one of the major redox buffers which protects bacteria against redox stressors and antibiotics; loss of ERG or mycothiol (MSH, the other major redox buffer in this bacteria) leads to respiratory alterations and bioenergetic deficiencies that negatively impact virulence. The polypeptide is Histidine N-alpha-methyltransferase (egtD) (Mycobacterium tuberculosis (strain CDC 1551 / Oshkosh)).